The following is a 511-amino-acid chain: mRNA export factor (511 aa).

A compositionally biased stretch (low complexity) spans 1–15 (MATDIDMLIDLGLDL). Positions 1–244 (MATDIDMLID…ERKAPAADTI (244 aa)) are disordered. The Nuclear export signal signature appears at 5–17 (IDMLIDLGLDLSD). 2 positions are modified to phosphoserine; by host: Ser-16 and Ser-18. Acidic residues-rich tracts occupy residues 16–26 (SDSDLDEDPPE) and 35–51 (LESD…EDME). The segment at 104–112 (VWSRLGARR) is interaction with host ALYREF. A Nuclear localization signal motif is present at residues 110–138 (ARRPSCSPEQHGGKVARLQPPPTKAQPAR). Ser-114 carries the post-translational modification Phosphoserine; by host. Arg-138 carries the post-translational modification Dimethylated arginine; by host. Positions 138–152 (RGGRRGRRRGRGRGG) are RGG-box. The span at 139–149 (GGRRGRRRGRG) shows a compositional bias: basic residues. Arg-148 is modified (omega-N-methylarginine; by host). Arg-150 is subject to Dimethylated arginine; by host. Positions 213–232 (APPPLMTLAIAPPPADPRAP) are enriched in pro residues. 4 residues coordinate Zn(2+): Cys-399, His-478, Cys-482, and Cys-487. The segment at 399 to 487 (CYLKARGLCG…HRQECSSRVC (89 aa)) adopts a CHC2-type zinc-finger fold.

Belongs to the HHV-1 ICP27 protein family. Interacts with host RBP1; this interaction facilitates the RNA polymerase recruitment to viral transcription sites. Interacts (via the RGG box) with host ALYREF/THOC4; this interaction recruits ALYREF to viral replication compartments and probably directs viral mRNA to the TAP/NFX1 pathway. Interacts (via the RGG box) with host SRPK1; this interaction relocalizes SRPK1 to the nucleus and seems to alter its activity. Interacts with ICP4; this interaction modulates ICP4 DNA-binding activity. Interacts with host NXF1; this interaction allows efficient export of HSV-1 early and late transcripts. Post-translationally, methylated within the RGG box possibly by host PRMT1. When hypomethylated, ICP27 is exported to the cytoplasm earlier and more rapidly. Phosphorylated.

Its subcellular location is the host cytoplasm. The protein localises to the host nucleus. Its function is as follows. Multifunctional regulator of the expression of viral genes that contributes to the shutoff of host protein synthesis and mediates nuclear export of viral intronless mRNAs. Early in infection, this immediate early (EI) protein mediates the inhibition of cellular splicing. This results in the accumulation of unprocessed 3'end pre-mRNAs which can't be exported from the nucleus. Cellular protein synthesis is thereby shut off early after virus infection. Later in the infection, it helps recruit cellular RNA polymerase II to viral replication sites and promotes the nuclear export of viral intronless mRNAs by interacting with mRNAs and host NXF1/TAP. ICP27 binds to NUP62 which may provide facilitated viral mRNA export and may compete with some host cell transport receptors for binding and inhibit cellular nucleocytoplasmic transport pathways. Also stimulates translation of viral transcripts. Repression of host gene expression blocks the cell cycle at the G1 phase and prevents apoptosis. Seems to silence the 3' splice site of the promyelocytic leukemia (PML) intron 7a, thereby switching PML isoforms from PML-II to PML-V. This could be linked to the accelerated mRNA export induced by ICP27 which might not provide sufficient time for PML pre-mRNA to be spliced in the nucleus. The protein is mRNA export factor of Human herpesvirus 1 (strain HFEM) (HHV-1).